The primary structure comprises 362 residues: Chorismate synthase (362 aa).

Arg47 contributes to the NADP(+) binding site. FMN-binding positions include 124 to 126, Gly286, 301 to 305, and Arg327; these read RSS and KPTAT.

This sequence belongs to the chorismate synthase family. Homotetramer. FMNH2 serves as cofactor.

It carries out the reaction 5-O-(1-carboxyvinyl)-3-phosphoshikimate = chorismate + phosphate. It functions in the pathway metabolic intermediate biosynthesis; chorismate biosynthesis; chorismate from D-erythrose 4-phosphate and phosphoenolpyruvate: step 7/7. Its function is as follows. Catalyzes the anti-1,4-elimination of the C-3 phosphate and the C-6 proR hydrogen from 5-enolpyruvylshikimate-3-phosphate (EPSP) to yield chorismate, which is the branch point compound that serves as the starting substrate for the three terminal pathways of aromatic amino acid biosynthesis. This reaction introduces a second double bond into the aromatic ring system. The polypeptide is Chorismate synthase (Nostoc punctiforme (strain ATCC 29133 / PCC 73102)).